The chain runs to 426 residues: Serine--tRNA ligase (426 aa).

231 to 233 (TAE) is a binding site for L-serine. 262–264 (RSE) serves as a coordination point for ATP. E285 is an L-serine binding site. 349 to 352 (EISS) provides a ligand contact to ATP. Position 385 (S385) interacts with L-serine.

The protein belongs to the class-II aminoacyl-tRNA synthetase family. Type-1 seryl-tRNA synthetase subfamily. In terms of assembly, homodimer. The tRNA molecule binds across the dimer.

It is found in the cytoplasm. The catalysed reaction is tRNA(Ser) + L-serine + ATP = L-seryl-tRNA(Ser) + AMP + diphosphate + H(+). It catalyses the reaction tRNA(Sec) + L-serine + ATP = L-seryl-tRNA(Sec) + AMP + diphosphate + H(+). Its pathway is aminoacyl-tRNA biosynthesis; selenocysteinyl-tRNA(Sec) biosynthesis; L-seryl-tRNA(Sec) from L-serine and tRNA(Sec): step 1/1. In terms of biological role, catalyzes the attachment of serine to tRNA(Ser). Is also able to aminoacylate tRNA(Sec) with serine, to form the misacylated tRNA L-seryl-tRNA(Sec), which will be further converted into selenocysteinyl-tRNA(Sec). This chain is Serine--tRNA ligase, found in Saccharophagus degradans (strain 2-40 / ATCC 43961 / DSM 17024).